The following is a 326-amino-acid chain: Beta-ketoacyl-[acyl-carrier-protein] synthase III (326 aa).

Residues Cys-112 and His-251 contribute to the active site. The ACP-binding stretch occupies residues 252 to 256 (QANSR). The active site involves Asn-281.

The protein belongs to the thiolase-like superfamily. FabH family. As to quaternary structure, homodimer.

It localises to the cytoplasm. It catalyses the reaction malonyl-[ACP] + acetyl-CoA + H(+) = 3-oxobutanoyl-[ACP] + CO2 + CoA. It functions in the pathway lipid metabolism; fatty acid biosynthesis. Functionally, catalyzes the condensation reaction of fatty acid synthesis by the addition to an acyl acceptor of two carbons from malonyl-ACP. Catalyzes the first condensation reaction which initiates fatty acid synthesis and may therefore play a role in governing the total rate of fatty acid production. Possesses both acetoacetyl-ACP synthase and acetyl transacylase activities. Its substrate specificity determines the biosynthesis of branched-chain and/or straight-chain of fatty acids. This Clostridium botulinum (strain Langeland / NCTC 10281 / Type F) protein is Beta-ketoacyl-[acyl-carrier-protein] synthase III.